Reading from the N-terminus, the 608-residue chain is 1-deoxy-D-xylulose-5-phosphate synthase (608 aa).

Thiamine diphosphate is bound by residues H66 and 107-109; that span reads GHA. D138 lines the Mg(2+) pocket. Residues 139–140, N167, F277, and E350 each bind thiamine diphosphate; that span reads GA. N167 lines the Mg(2+) pocket.

It belongs to the transketolase family. DXPS subfamily. In terms of assembly, homodimer. It depends on Mg(2+) as a cofactor. Thiamine diphosphate serves as cofactor.

The catalysed reaction is D-glyceraldehyde 3-phosphate + pyruvate + H(+) = 1-deoxy-D-xylulose 5-phosphate + CO2. Its pathway is metabolic intermediate biosynthesis; 1-deoxy-D-xylulose 5-phosphate biosynthesis; 1-deoxy-D-xylulose 5-phosphate from D-glyceraldehyde 3-phosphate and pyruvate: step 1/1. In terms of biological role, catalyzes the acyloin condensation reaction between C atoms 2 and 3 of pyruvate and glyceraldehyde 3-phosphate to yield 1-deoxy-D-xylulose-5-phosphate (DXP). The protein is 1-deoxy-D-xylulose-5-phosphate synthase of Thermotoga maritima (strain ATCC 43589 / DSM 3109 / JCM 10099 / NBRC 100826 / MSB8).